Reading from the N-terminus, the 465-residue chain is Mitochondrial distribution and morphology protein 10 (465 aa).

Belongs to the MDM10 family. In terms of assembly, component of the ER-mitochondria encounter structure (ERMES) or MDM complex, composed of MMM1, MDM10, MDM12 and MDM34. Associates with the mitochondrial outer membrane sorting assembly machinery SAM(core) complex.

It localises to the mitochondrion outer membrane. Its function is as follows. Component of the ERMES/MDM complex, which serves as a molecular tether to connect the endoplasmic reticulum and mitochondria. Components of this complex are involved in the control of mitochondrial shape and protein biogenesis and may function in phospholipid exchange. MDM10 is involved in the late assembly steps of the general translocase of the mitochondrial outer membrane (TOM complex). Functions in the TOM40-specific route of the assembly of outer membrane beta-barrel proteins, including the association of TOM40 with the receptor TOM22 and small TOM proteins. Can associate with the SAM(core) complex as well as the MDM12-MMM1 complex, both involved in late steps of the major beta-barrel assembly pathway, that is responsible for biogenesis of all outer membrane beta-barrel proteins. May act as a switch that shuttles between both complexes and channels precursor proteins into the TOM40-specific pathway. Plays a role in mitochondrial morphology and in the inheritance of mitochondria. The sequence is that of Mitochondrial distribution and morphology protein 10 from Eremothecium gossypii (strain ATCC 10895 / CBS 109.51 / FGSC 9923 / NRRL Y-1056) (Yeast).